We begin with the raw amino-acid sequence, 273 residues long: Ribosomal RNA small subunit methyltransferase A (273 aa).

S-adenosyl-L-methionine is bound by residues asparagine 18, leucine 20, glycine 45, glutamate 66, aspartate 91, and asparagine 113.

Belongs to the class I-like SAM-binding methyltransferase superfamily. rRNA adenine N(6)-methyltransferase family. RsmA subfamily.

It localises to the cytoplasm. It carries out the reaction adenosine(1518)/adenosine(1519) in 16S rRNA + 4 S-adenosyl-L-methionine = N(6)-dimethyladenosine(1518)/N(6)-dimethyladenosine(1519) in 16S rRNA + 4 S-adenosyl-L-homocysteine + 4 H(+). Its function is as follows. Specifically dimethylates two adjacent adenosines (A1518 and A1519) in the loop of a conserved hairpin near the 3'-end of 16S rRNA in the 30S particle. May play a critical role in biogenesis of 30S subunits. In Citrobacter koseri (strain ATCC BAA-895 / CDC 4225-83 / SGSC4696), this protein is Ribosomal RNA small subunit methyltransferase A.